We begin with the raw amino-acid sequence, 506 residues long: L-amino-acid oxidase (506 aa).

A signal peptide spans 1-18 (MNVFFTFSLLFLAALGSC). An intrachain disulfide couples Cys28 to Cys191. Glu36 serves as a coordination point for Zn(2+). FAD contacts are provided by residues 61–62 (MS), Ser62, 81–82 (EA), Arg89, and 105–108 (GPMR). Substrate is bound at residue Arg108. Zn(2+) contacts are provided by Glu111, Glu118, and Glu150. A glycan (N-linked (GlcNAc...) asparagine) is linked at Asn190. Asp219 is a Zn(2+) binding site. His241 is a substrate binding site. Glu248 is a binding site for Zn(2+). Val279 is an FAD binding site. The Zn(2+) site is built by Glu299 and His332. A disulfide bond links Cys349 and Cys430. Substrate is bound at residue Tyr390. His458 lines the Zn(2+) pocket. FAD is bound by residues Glu475 and 482 to 487 (GWIDST). 482–483 (GW) lines the substrate pocket.

The protein belongs to the flavin monoamine oxidase family. FIG1 subfamily. In terms of assembly, homodimer; non-covalently linked. Stabilized by a single zinc-binding site located at the dimer interface (Asp-219, His-332 and His-458). Other zinc-bind sites can be understood as transient and non-specific, and appear due to the high concentration of zinc ions used in the crystallization experiments. It depends on FAD as a cofactor. As to expression, expressed by the venom gland.

The protein resides in the secreted. It carries out the reaction an L-alpha-amino acid + O2 + H2O = a 2-oxocarboxylate + H2O2 + NH4(+). It catalyses the reaction L-leucine + O2 + H2O = 4-methyl-2-oxopentanoate + H2O2 + NH4(+). The enzyme catalyses L-phenylalanine + O2 + H2O = 3-phenylpyruvate + H2O2 + NH4(+). The catalysed reaction is L-tryptophan + O2 + H2O = indole-3-pyruvate + H2O2 + NH4(+). It carries out the reaction L-methionine + O2 + H2O = 4-methylsulfanyl-2-oxobutanoate + H2O2 + NH4(+). It catalyses the reaction L-isoleucine + O2 + H2O = (S)-3-methyl-2-oxopentanoate + H2O2 + NH4(+). The enzyme catalyses L-tyrosine + O2 + H2O = 3-(4-hydroxyphenyl)pyruvate + H2O2 + NH4(+). In terms of biological role, catalyzes an oxidative deamination of predominantly hydrophobic and aromatic L-amino acids, thus producing hydrogen peroxide that may contribute to the diverse toxic effects of this enzyme. Shows high catalytic activity against L-Met, L-Leu, L-Phe, L-Trp, L-Tyr, L-Ile. Shows no or weak activity on L-Cys, L-Val, L-Gln, L-Thr, L-Ser, L-Lys, L-Arg, L-Asn, L-Glu, L-Gly, L-Pro, L-Asp and L-His. Induces platelet aggregation in platelet-rich plasma, probably due to hydrogen peroxide production, since catalase inhibits aggregation effect. Induces moderate mouse paw edema. Induces apoptosis and shows cytotoxicity against several cancer cell lines, which is inhibited by catalase. Shows hemolytic activity and antibacterial activities against both Gram-positive and Gram-negative bacteria. Has parasiticidal activities against both trypanosomes and leishmania, as a result of enzyme-catalyzed hydrogen peroxide production. Unlike other snake venom L-amino acid oxidases, does not induce hemorrhage (with 50 ug of enzyme). The chain is L-amino-acid oxidase from Bothrops atrox (Barba amarilla).